A 697-amino-acid polypeptide reads, in one-letter code: Long-chain-fatty-acid--CoA ligase 6 (697 aa).

The chain crosses the membrane as a helical; Signal-anchor for type III membrane protein span at residues 25–45; it reads LSATTLVSMGALAAILAYWLT. Topologically, residues 46 to 697 are cytoplasmic; sequence HRPKALQPPC…QIEELYSISM (652 aa).

It belongs to the ATP-dependent AMP-binding enzyme family. It depends on Mg(2+) as a cofactor. In terms of tissue distribution, expressed predominantly in brain and, to a much lesser extent, in heart and adrenal.

Its subcellular location is the mitochondrion outer membrane. The protein localises to the peroxisome membrane. It localises to the microsome membrane. It is found in the endoplasmic reticulum membrane. It carries out the reaction a long-chain fatty acid + ATP + CoA = a long-chain fatty acyl-CoA + AMP + diphosphate. The enzyme catalyses (5Z,8Z,11Z,14Z)-eicosatetraenoate + ATP + CoA = (5Z,8Z,11Z,14Z)-eicosatetraenoyl-CoA + AMP + diphosphate. The catalysed reaction is 15-hydroxy-(5Z,8Z,11Z,13E)-eicosatetraenoate + ATP + CoA = 15-hydroxy-(5Z,8Z,11Z,13E)-eicosatetraenoyl-CoA + AMP + diphosphate. It catalyses the reaction 12-hydroxy-(5Z,8Z,10E,14Z)-eicosatetraenoate + ATP + CoA = 12-hydroxy-(5Z,8Z,10E,14Z)-eicosatetraenoyl-CoA + AMP + diphosphate. It carries out the reaction 5-hydroxy-(6E,8Z,11Z,14Z)-eicosatetraenoate + ATP + CoA = 5-hydroxy-(6E,8Z,11Z,14Z)-eicosatetraenoyl-CoA + AMP + diphosphate. The enzyme catalyses hexadecanoate + ATP + CoA = hexadecanoyl-CoA + AMP + diphosphate. The catalysed reaction is (E)-hexadec-2-enoate + ATP + CoA = (2E)-hexadecenoyl-CoA + AMP + diphosphate. Functionally, catalyzes the conversion of long-chain fatty acids to their active form acyl-CoA for both synthesis of cellular lipids, and degradation via beta-oxidation. Plays an important role in fatty acid metabolism in brain and the acyl-CoAs produced may be utilized exclusively for the synthesis of the brain lipid. The chain is Long-chain-fatty-acid--CoA ligase 6 from Rattus norvegicus (Rat).